A 394-amino-acid polypeptide reads, in one-letter code: Glycerol-1-phosphate dehydrogenase [NAD(P)+] (394 aa).

NAD(+) is bound by residues aspartate 54, 116–120, and 138–141; these read GTIHD and TAPS. Aspartate 143 contributes to the substrate binding site. Serine 147 contacts NAD(+). Aspartate 190 contacts substrate. Ni(2+) contacts are provided by aspartate 190 and histidine 270. Histidine 274 is a binding site for substrate. Histidine 290 serves as a coordination point for Ni(2+).

Belongs to the glycerol-1-phosphate dehydrogenase family. In terms of assembly, homodimer. Ni(2+) serves as cofactor.

Its subcellular location is the cytoplasm. The catalysed reaction is sn-glycerol 1-phosphate + NAD(+) = dihydroxyacetone phosphate + NADH + H(+). It catalyses the reaction sn-glycerol 1-phosphate + NADP(+) = dihydroxyacetone phosphate + NADPH + H(+). Functionally, catalyzes the NAD(P)H-dependent reduction of dihydroxyacetonephosphate (DHAP or glycerone phosphate) to glycerol 1-phosphate (G1P). The G1P thus generated is probably used for the synthesis of phosphoglycerolipids in Gram-positive bacterial species. The chain is Glycerol-1-phosphate dehydrogenase [NAD(P)+] from Bacillus velezensis (strain DSM 23117 / BGSC 10A6 / LMG 26770 / FZB42) (Bacillus amyloliquefaciens subsp. plantarum).